A 343-amino-acid polypeptide reads, in one-letter code: Protein pelota homolog (343 aa).

The protein belongs to the eukaryotic release factor 1 family. Pelota subfamily. In terms of assembly, monomer. It depends on a divalent metal cation as a cofactor.

The protein localises to the cytoplasm. May function in recognizing stalled ribosomes, interact with stem-loop structures in stalled mRNA molecules, and effect endonucleolytic cleavage of the mRNA. May play a role in the release non-functional ribosomes and degradation of damaged mRNAs. Has endoribonuclease activity. This is Protein pelota homolog from Cenarchaeum symbiosum (strain A).